Consider the following 70-residue polypeptide: Protein SlyX homolog (70 aa).

Belongs to the SlyX family.

The polypeptide is Protein SlyX homolog (Shewanella piezotolerans (strain WP3 / JCM 13877)).